We begin with the raw amino-acid sequence, 434 residues long: Bcl-2-like protein 13 (434 aa).

The BH4 signature appears at 14–30; sequence ETKYVVLSYLGLLSQEK. S35 is modified (phosphoserine). Positions 97–113 match the BH3 motif; sequence IEDCLAHLGERVSQDLK. The BH1 motif lies at 144–154; it reads ASGWNKLLVPL. Residues 190-203 carry the BH2 motif; that stretch reads FIIQQGGWGSVFSL. Positions 224 to 245 are disordered; it reads LPSDNSGQVSPPESPTVTTSWQ. A compositionally biased stretch (polar residues) spans 226–245; the sequence is SDNSGQVSPPESPTVTTSWQ. An A repeat occupies 243–253; the sequence is SWQSESLPVSL. A phosphoserine mark is found at S256, S258, S300, S343, S347, S377, and S387. An A; approximate repeat occupies 258–268; that stretch reads SWHTESLPVSL. A disordered region spans residues 282 to 303; that stretch reads EVKSLDSSGAGEKSENNSSNSD. Residues 363–398 form a disordered region; that stretch reads RPEAVERAEGAAQLSEERAGSRKKSHTGEAAAVRGA. Residues 365 to 382 are compositionally biased toward basic and acidic residues; sequence EAVERAEGAAQLSEERAG. The chain crosses the membrane as a helical span at residues 409-429; that stretch reads VLLFGGAAAVAILAVAVGVAL.

This sequence belongs to the Bcl-2 family. In terms of assembly, monomer.

The protein resides in the mitochondrion membrane. May promote the activation of caspase-3 and apoptosis. This chain is Bcl-2-like protein 13 (Bcl2l13), found in Mus musculus (Mouse).